Consider the following 118-residue polypeptide: Small ribosomal subunit protein uS12cz/uS12cy (118 aa).

It belongs to the universal ribosomal protein uS12 family. In terms of assembly, part of the 30S ribosomal subunit.

It localises to the plastid. Its subcellular location is the chloroplast. Functionally, with S4 and S5 plays an important role in translational accuracy. Located at the interface of the 30S and 50S subunits. In Helianthus annuus (Common sunflower), this protein is Small ribosomal subunit protein uS12cz/uS12cy (rps12-A).